We begin with the raw amino-acid sequence, 169 residues long: Aspartic protease inhibitor 3 (169 aa).

Asparagine 1 carries an N-linked (GlcNAc...) asparagine glycan. Intrachain disulfides connect cysteine 30/cysteine 75 and cysteine 124/cysteine 134.

This sequence belongs to the protease inhibitor I3 (leguminous Kunitz-type inhibitor) family.

The protein localises to the vacuole. Functionally, inhibitor of cathepsin D (aspartic protease). May also inhibit trypsin and chymotrypsin (serine proteases). Protects the plant by inhibiting proteases of invading organisms. This is Aspartic protease inhibitor 3 from Solanum tuberosum (Potato).